Consider the following 63-residue polypeptide: Arabinogalactan protein 22 (63 aa).

The signal sequence occupies residues 1 to 27; the sequence is MASLKFPLEILAVFVIISVILLPIAQS. Proline 32, proline 34, and proline 36 each carry 4-hydroxyproline. O-linked (Ara...) hydroxyproline glycans are attached at residues proline 32, proline 34, and proline 36. Serine 38 carries GPI-anchor amidated serine lipidation. Positions 39-63 are cleaved as a propeptide — removed in mature form; the sequence is DGTSIDQGIAYVLMMVALALTYFIH.

Belongs to the AG-peptide AGP family. Contains 4-hydroxyproline; hydroxylated on Pro-32, Pro-34 and Pro-36. Post-translationally, O-glycosylated on hydroxyprolines; noncontiguous hydroxylproline residues are glycosylated with arabinogalactan.

The protein resides in the cell membrane. Proteoglycan that seems to be implicated in diverse developmental roles such as differentiation, cell-cell recognition, embryogenesis and programmed cell death. This Arabidopsis thaliana (Mouse-ear cress) protein is Arabinogalactan protein 22.